A 127-amino-acid polypeptide reads, in one-letter code: MSKASYVKFEVPQDLADKVLEAVRKAKESGKIKKGTNETTKAVERGQAKLVIIAEDVQPEEIVAHLPLLCDEKKIPYVYVSSKKALGEACGLQVATASAAILEPGEAKDLVDEIIKRVNEIKGKTSS.

Belongs to the eukaryotic ribosomal protein eL8 family. Part of the 50S ribosomal subunit. Component of box C/D small ribonucleoprotein (sRNP) particles that contain rpl7ae, FlpA and nop5, plus a guide RNA. These sRNP particles form homodimers, giving rise to an asymmetric holoenzyme. Probably part of the RNase P complex.

It localises to the cytoplasm. Multifunctional RNA-binding protein that recognizes the K-turn motif in ribosomal RNA, the RNA component of RNase P, box H/ACA, box C/D and box C'/D' sRNAs. In Saccharolobus solfataricus (strain ATCC 35092 / DSM 1617 / JCM 11322 / P2) (Sulfolobus solfataricus), this protein is Large ribosomal subunit protein eL8.